The sequence spans 543 residues: CTP synthase (543 aa).

The amidoligase domain stretch occupies residues 1–265 (MARYIFITGG…DGEVLRHFGL (265 aa)). Ser13 is a binding site for CTP. Position 13 (Ser13) interacts with UTP. 14–19 (SLGKGL) contacts ATP. Tyr54 is a binding site for L-glutamine. Residue Asp71 coordinates ATP. Asp71 and Glu139 together coordinate Mg(2+). CTP-binding positions include 146 to 148 (DIE), 186 to 191 (KTKPTQ), and Lys222. Residues 186–191 (KTKPTQ) and Lys222 contribute to the UTP site. In terms of domain architecture, Glutamine amidotransferase type-1 spans 290 to 542 (TIGVVGKYVG…IAAAVKQARL (253 aa)). Position 354 (Gly354) interacts with L-glutamine. Catalysis depends on Cys381, which acts as the Nucleophile; for glutamine hydrolysis. Residues 382–385 (LGMQ), Glu405, and Arg470 each bind L-glutamine. Residues His515 and Glu517 contribute to the active site.

This sequence belongs to the CTP synthase family. In terms of assembly, homotetramer.

It catalyses the reaction UTP + L-glutamine + ATP + H2O = CTP + L-glutamate + ADP + phosphate + 2 H(+). It carries out the reaction L-glutamine + H2O = L-glutamate + NH4(+). The catalysed reaction is UTP + NH4(+) + ATP = CTP + ADP + phosphate + 2 H(+). It functions in the pathway pyrimidine metabolism; CTP biosynthesis via de novo pathway; CTP from UDP: step 2/2. Allosterically activated by GTP, when glutamine is the substrate; GTP has no effect on the reaction when ammonia is the substrate. The allosteric effector GTP functions by stabilizing the protein conformation that binds the tetrahedral intermediate(s) formed during glutamine hydrolysis. Inhibited by the product CTP, via allosteric rather than competitive inhibition. Its function is as follows. Catalyzes the ATP-dependent amination of UTP to CTP with either L-glutamine or ammonia as the source of nitrogen. Regulates intracellular CTP levels through interactions with the four ribonucleotide triphosphates. This is CTP synthase from Novosphingobium aromaticivorans (strain ATCC 700278 / DSM 12444 / CCUG 56034 / CIP 105152 / NBRC 16084 / F199).